The chain runs to 118 residues: Large ribosomal subunit protein bL19 (118 aa).

This sequence belongs to the bacterial ribosomal protein bL19 family.

Its function is as follows. This protein is located at the 30S-50S ribosomal subunit interface and may play a role in the structure and function of the aminoacyl-tRNA binding site. The chain is Large ribosomal subunit protein bL19 from Helicobacter pylori (strain HPAG1).